The chain runs to 749 residues: Phosphate-regulating neutral endopeptidase PHEX (749 aa).

The Cytoplasmic segment spans residues 1 to 20 (MEAETGSTMETGKGTNRGIR). Residues 21–37 (IALALFIGGTLVLGTLL) form a helical; Signal-anchor for type II membrane protein membrane-spanning segment. Residues 38-749 (FLVSQGLLSF…NRGADSCRLW (712 aa)) lie on the Extracellular side of the membrane. The Peptidase M13 domain maps to 53 to 749 (YCLKPECIEA…NRGADSCRLW (697 aa)). A disulfide bridge links C54 with C59. N71, N238, N263, N290, N301, N377, and N484 each carry an N-linked (GlcNAc...) asparagine glycan. 4 cysteine pairs are disulfide-bonded: C77–C733, C85–C693, C142–C406, and C617–C746. H580 is a binding site for Zn(2+). The active site involves E581. Residues H584 and E642 each contribute to the Zn(2+) site. Residue D646 is the Proton donor of the active site. N-linked (GlcNAc...) asparagine glycosylation is present at N736.

Belongs to the peptidase M13 family. Interacts with MEPE; the interaction is zinc-dependent (via ASARM motif). Zn(2+) is required as a cofactor. N-glycosylated. As to expression, expressed in bone, specifically in the osteoid and in osteocytes. Expressed in teeth, specifically in odontoblasts and ameloblasts. Expressed moderately by macrophages in the liver and has minimal expression in brown adipose tissue. Also expressed in suprabasal layers of the skin.

Its subcellular location is the cell membrane. Functionally, peptidase that cleaves SIBLING (small integrin-binding ligand, N-linked glycoprotein)-derived ASARM peptides, thus regulating their biological activity. Cleaves ASARM peptides between Ser and Glu or Asp residues. Regulates osteogenic cell differentiation and bone mineralization through the cleavage of the MEPE-derived ASARM peptide. Promotes dentin mineralization and renal phosphate reabsorption by cleaving DMP1- and MEPE-derived ASARM peptides. Inhibits the cleavage of MEPE by CTSB/cathepsin B thus preventing MEPE degradation. This Mus musculus (Mouse) protein is Phosphate-regulating neutral endopeptidase PHEX (Phex).